Reading from the N-terminus, the 187-residue chain is MLVLLNKPYGVLSQFSDRSTPPKRTLAEFGLPPQVYAAGRLDHDSEGLLLLTDDGPLAHRLTDPRHKQPKTYWVQVEGDPDTSQLQALCDGVLLNDGPTRPANVRRLECAPTLWPRDPPVRVRKTVPDAWLEVQITEGRNRQVRRMTASVGLPTLRLVRVAIGAWSLASLQPGQWRVDDARAVRPAR.

Asp42 functions as the Nucleophile in the catalytic mechanism.

The protein belongs to the pseudouridine synthase RsuA family.

The catalysed reaction is uridine(2457) in 23S rRNA = pseudouridine(2457) in 23S rRNA. Functionally, responsible for synthesis of pseudouridine from uracil-2457 in 23S ribosomal RNA. In Xanthomonas campestris pv. campestris (strain ATCC 33913 / DSM 3586 / NCPPB 528 / LMG 568 / P 25), this protein is Ribosomal large subunit pseudouridine synthase E (rluE).